A 285-amino-acid chain; its full sequence is Pantothenate synthetase (285 aa).

Residue 33 to 40 (MGALHEGH) coordinates ATP. The active-site Proton donor is the H40. Position 64 (Q64) interacts with (R)-pantoate. Q64 contributes to the beta-alanine binding site. ATP is bound at residue 150 to 153 (GEKD). Residue Q156 coordinates (R)-pantoate. ATP contacts are provided by residues A179 and 187 to 190 (LSSR).

Belongs to the pantothenate synthetase family. Homodimer.

It localises to the cytoplasm. The catalysed reaction is (R)-pantoate + beta-alanine + ATP = (R)-pantothenate + AMP + diphosphate + H(+). The protein operates within cofactor biosynthesis; (R)-pantothenate biosynthesis; (R)-pantothenate from (R)-pantoate and beta-alanine: step 1/1. Catalyzes the condensation of pantoate with beta-alanine in an ATP-dependent reaction via a pantoyl-adenylate intermediate. The chain is Pantothenate synthetase from Caulobacter vibrioides (strain ATCC 19089 / CIP 103742 / CB 15) (Caulobacter crescentus).